Here is a 135-residue protein sequence, read N- to C-terminus: Protein E6 (135 aa).

Zinc fingers lie at residues 11-47 (CIWC…CTSC) and 83-119 (CMYC…CYLC).

The protein belongs to the papillomaviridae E6 protein family. In terms of assembly, forms homodimers. Interacts with ubiquitin-protein ligase UBE3A/E6-AP; this interaction stimulates UBE3A ubiquitin activity. Interacts with host BAK1.

It localises to the host cytoplasm. Its subcellular location is the host nucleus. Functionally, plays a major role in the induction and maintenance of cellular transformation. E6 associates with host UBE3A/E6-AP ubiquitin-protein ligase and modulates its activity. Protects host keratinocytes from apoptosis by mediating the degradation of host BAK1. May also inhibit host immune response. In Cervus elaphus (Red deer), this protein is Protein E6.